The following is a 286-amino-acid chain: uncharacterized protein (286 aa).

Residue H183 is the Proton donor of the active site. C277 acts as the Nucleophile in catalysis.

The protein belongs to the DDAH family.

This is an uncharacterized protein from Bacillus subtilis (strain 168).